Here is a 432-residue protein sequence, read N- to C-terminus: Adenylosuccinate synthetase 1 (432 aa).

GTP contacts are provided by residues 12 to 18 (GDEGKGR) and 40 to 42 (GHT). Asp13 (proton acceptor) is an active-site residue. Residues Asp13 and Gly40 each contribute to the Mg(2+) site. Residues 13–16 (DEGK), 38–41 (NAGH), Thr128, Arg142, Gln222, Thr237, and Arg301 contribute to the IMP site. The active-site Proton donor is the His41. 297–303 (TNTGRPR) contributes to the substrate binding site. GTP contacts are provided by residues Arg303, 329–331 (KLD), and 411–413 (STG).

The protein belongs to the adenylosuccinate synthetase family. As to quaternary structure, homodimer. It depends on Mg(2+) as a cofactor.

Its subcellular location is the cytoplasm. It catalyses the reaction IMP + L-aspartate + GTP = N(6)-(1,2-dicarboxyethyl)-AMP + GDP + phosphate + 2 H(+). The protein operates within purine metabolism; AMP biosynthesis via de novo pathway; AMP from IMP: step 1/2. Plays an important role in the de novo pathway of purine nucleotide biosynthesis. Catalyzes the first committed step in the biosynthesis of AMP from IMP. The sequence is that of Adenylosuccinate synthetase 1 from Chromobacterium violaceum (strain ATCC 12472 / DSM 30191 / JCM 1249 / CCUG 213 / NBRC 12614 / NCIMB 9131 / NCTC 9757 / MK).